The chain runs to 126 residues: Holo-[acyl-carrier-protein] synthase (126 aa).

Mg(2+)-binding residues include Asp9 and Glu58.

It belongs to the P-Pant transferase superfamily. AcpS family. Mg(2+) is required as a cofactor.

It is found in the cytoplasm. It carries out the reaction apo-[ACP] + CoA = holo-[ACP] + adenosine 3',5'-bisphosphate + H(+). Its function is as follows. Transfers the 4'-phosphopantetheine moiety from coenzyme A to a Ser of acyl-carrier-protein. This is Holo-[acyl-carrier-protein] synthase from Klebsiella pneumoniae subsp. pneumoniae (strain ATCC 700721 / MGH 78578).